Reading from the N-terminus, the 363-residue chain is Double-strand-specific pac1 ribonuclease (363 aa).

Disordered stretches follow at residues 1-35 (MGRF…KRSS) and 92-138 (SRHD…PPLR). Residues 13–22 (DSSSSASDSL) are compositionally biased toward low complexity. The segment covering 24-35 (RGRRSLGHKRSS) has biased composition (basic residues). S122 is modified (phosphoserine). The region spanning 139 to 262 (SEKLKEQVFM…YLGALILDGQ (124 aa)) is the RNase III domain. One can recognise a DRBM domain in the interval 285–356 (RPIDKLAKSK…AMQALEVLAK (72 aa)).

Mg(2+) serves as cofactor.

The catalysed reaction is Endonucleolytic cleavage to 5'-phosphomonoester.. In terms of biological role, digests double-stranded RNA. Converts long double-stranded RNAs into short oligonucleotides, leaving 5'-phosphates on their cleavage products. Probably inhibits mating and meiosis by degrading a specific mRNA required for sexual development. In Schizosaccharomyces pombe (strain 972 / ATCC 24843) (Fission yeast), this protein is Double-strand-specific pac1 ribonuclease (pac1).